A 117-amino-acid polypeptide reads, in one-letter code: uncharacterized protein (117 aa).

This is an uncharacterized protein from Schizosaccharomyces pombe (strain 972 / ATCC 24843) (Fission yeast).